Here is a 494-residue protein sequence, read N- to C-terminus: Inosine-5'-monophosphate dehydrogenase (494 aa).

CBS domains are found at residues isoleucine 93–isoleucine 154 and methionine 158–methionine 217. NAD(+) is bound by residues aspartate 251 and glycine 301 to glycine 303. 2 residues coordinate K(+): glycine 303 and glycine 305. Residue serine 306 participates in IMP binding. Position 308 (cysteine 308) interacts with K(+). Cysteine 308 serves as the catalytic Thioimidate intermediate. Residues aspartate 341–glycine 343, glycine 364–serine 365, and tyrosine 388–glycine 392 each bind IMP. Arginine 406 serves as the catalytic Proton acceptor. Glutamate 421 serves as a coordination point for IMP. 3 residues coordinate K(+): glutamate 475, serine 476, and histidine 477.

This sequence belongs to the IMPDH/GMPR family. In terms of assembly, homotetramer. It depends on K(+) as a cofactor.

The catalysed reaction is IMP + NAD(+) + H2O = XMP + NADH + H(+). It functions in the pathway purine metabolism; XMP biosynthesis via de novo pathway; XMP from IMP: step 1/1. Mycophenolic acid (MPA) is a non-competitive inhibitor that prevents formation of the closed enzyme conformation by binding to the same site as the amobile flap. In contrast, mizoribine monophosphate (MZP) is a competitive inhibitor that induces the closed conformation. MPA is a potent inhibitor of mammalian IMPDHs but a poor inhibitor of the bacterial enzymes. MZP is a more potent inhibitor of bacterial IMPDH. In terms of biological role, catalyzes the conversion of inosine 5'-phosphate (IMP) to xanthosine 5'-phosphate (XMP), the first committed and rate-limiting step in the de novo synthesis of guanine nucleotides, and therefore plays an important role in the regulation of cell growth. This is Inosine-5'-monophosphate dehydrogenase from Chlorobaculum parvum (strain DSM 263 / NCIMB 8327) (Chlorobium vibrioforme subsp. thiosulfatophilum).